Here is a 540-residue protein sequence, read N- to C-terminus: Glucose-6-phosphate isomerase (540 aa).

Glutamate 350 (proton donor) is an active-site residue. Catalysis depends on residues histidine 381 and lysine 503.

This sequence belongs to the GPI family.

It localises to the cytoplasm. The enzyme catalyses alpha-D-glucose 6-phosphate = beta-D-fructose 6-phosphate. Its pathway is carbohydrate biosynthesis; gluconeogenesis. It participates in carbohydrate degradation; glycolysis; D-glyceraldehyde 3-phosphate and glycerone phosphate from D-glucose: step 2/4. Functionally, catalyzes the reversible isomerization of glucose-6-phosphate to fructose-6-phosphate. The chain is Glucose-6-phosphate isomerase from Burkholderia multivorans (strain ATCC 17616 / 249).